Here is a 285-residue protein sequence, read N- to C-terminus: Coagulation factor IX (285 aa).

Y23 is modified (sulfotyrosine). N25 carries an N-linked (GlcNAc...) asparagine glycan. Residue T27 is modified to Phosphothreonine; alternate. T27 carries an O-linked (GalNAc...) threonine; alternate glycan. N45 is a glycosylation site (N-linked (GlcNAc...) asparagine). The O-linked (GalNAc...) threonine glycan is linked to T47. In terms of domain architecture, Peptidase S1 spans 59 to 285 (VVGGEDAKPG…YTKVSRYVNW (227 aa)). The cysteines at positions 84 and 100 are disulfide-linked. H99 (charge relay system) is an active-site residue. 3 residues coordinate Ca(2+): N115, E120, and E123. N-linked (GlcNAc...) asparagine glycosylation is found at N127 and N138. D147 serves as the catalytic Charge relay system. 2 disulfides stabilise this stretch: C214/C228 and C239/C267. Residue S243 is the Charge relay system of the active site.

The protein belongs to the peptidase S1 family. As to quaternary structure, heterodimer of a light chain and a heavy chain; disulfide-linked. Interacts (inactive and activated) with F11 (activated) in calcium-dependent manner. Interacts with SERPINC1. In terms of processing, activated by factor XIa, which excises the activation peptide. The propeptide can also be removed by snake venom protease. Activated by coagulation factor VIIa-tissue factor (F7-F3) complex in calcium-dependent manner.

The protein resides in the secreted. It catalyses the reaction Selective cleavage of Arg-|-Ile bond in factor X to form factor Xa.. Factor IX is a vitamin K-dependent plasma protein that participates in the intrinsic pathway of blood coagulation by converting factor X to its active form in the presence of Ca(2+) ions, phospholipids, and factor VIIIa. This is Coagulation factor IX (F9) from Cavia porcellus (Guinea pig).